Here is an 85-residue protein sequence, read N- to C-terminus: Large ribosomal subunit protein bL27 (85 aa).

Belongs to the bacterial ribosomal protein bL27 family.

The polypeptide is Large ribosomal subunit protein bL27 (Campylobacter hominis (strain ATCC BAA-381 / DSM 21671 / CCUG 45161 / LMG 19568 / NCTC 13146 / CH001A)).